Consider the following 474-residue polypeptide: Aspartyl/glutamyl-tRNA(Asn/Gln) amidotransferase subunit B (474 aa).

Belongs to the GatB/GatE family. GatB subfamily. In terms of assembly, heterotrimer of A, B and C subunits.

The enzyme catalyses L-glutamyl-tRNA(Gln) + L-glutamine + ATP + H2O = L-glutaminyl-tRNA(Gln) + L-glutamate + ADP + phosphate + H(+). It carries out the reaction L-aspartyl-tRNA(Asn) + L-glutamine + ATP + H2O = L-asparaginyl-tRNA(Asn) + L-glutamate + ADP + phosphate + 2 H(+). Allows the formation of correctly charged Asn-tRNA(Asn) or Gln-tRNA(Gln) through the transamidation of misacylated Asp-tRNA(Asn) or Glu-tRNA(Gln) in organisms which lack either or both of asparaginyl-tRNA or glutaminyl-tRNA synthetases. The reaction takes place in the presence of glutamine and ATP through an activated phospho-Asp-tRNA(Asn) or phospho-Glu-tRNA(Gln). In Limosilactobacillus reuteri (strain DSM 20016) (Lactobacillus reuteri), this protein is Aspartyl/glutamyl-tRNA(Asn/Gln) amidotransferase subunit B.